We begin with the raw amino-acid sequence, 280 residues long: Proteasome subunit beta (280 aa).

A propeptide spans 1–53 (MSEYSAGRSGFSPAYLDRVGSSFTDFLAAAAPHLLPGSRPVPQIPVGNVTPHG) (removed in mature form; by autocatalysis). Thr54 functions as the Nucleophile in the catalytic mechanism.

The protein belongs to the peptidase T1B family. The 20S proteasome core is composed of 14 alpha and 14 beta subunits that assemble into four stacked heptameric rings, resulting in a barrel-shaped structure. The two inner rings, each composed of seven catalytic beta subunits, are sandwiched by two outer rings, each composed of seven alpha subunits. The catalytic chamber with the active sites is on the inside of the barrel. Has a gated structure, the ends of the cylinder being occluded by the N-termini of the alpha-subunits. Is capped by the proteasome-associated ATPase, ARC.

Its subcellular location is the cytoplasm. The enzyme catalyses Cleavage of peptide bonds with very broad specificity.. The protein operates within protein degradation; proteasomal Pup-dependent pathway. Its activity is regulated as follows. The formation of the proteasomal ATPase ARC-20S proteasome complex, likely via the docking of the C-termini of ARC into the intersubunit pockets in the alpha-rings, may trigger opening of the gate for substrate entry. Interconversion between the open-gate and close-gate conformations leads to a dynamic regulation of the 20S proteasome proteolysis activity. In terms of biological role, component of the proteasome core, a large protease complex with broad specificity involved in protein degradation. This chain is Proteasome subunit beta, found in Geodermatophilus obscurus (strain ATCC 25078 / DSM 43160 / JCM 3152 / CCUG 61914 / KCC A-0152 / KCTC 9177 / NBRC 13315 / NRRL B-3577 / G-20).